Reading from the N-terminus, the 358-residue chain is CRS2-associated factor 2, mitochondrial (358 aa).

The transit peptide at M1–C28 directs the protein to the mitochondrion. The disordered stretch occupies residues D35–E64. CRM domains lie at E141–I239 and D261–T357.

In terms of assembly, part of large ribonucleo-protein complexes that include group IIB introns.

It localises to the mitochondrion. Its function is as follows. May be involved in the splicing of group IIB introns in mitochondria. This Arabidopsis thaliana (Mouse-ear cress) protein is CRS2-associated factor 2, mitochondrial.